The sequence spans 393 residues: SEC12-like protein 2 (393 aa).

An N-acetylalanine modification is found at Ala-2. Topologically, residues 2–367 (ANQSTETNQP…EQKGDKPGVR (366 aa)) are cytoplasmic. Positions 41 to 67 (EKSEDDDESSSSSSSSRSCIVLSGGGG) are disordered. Residue Ser-43 is modified to Phosphoserine. WD repeat units lie at residues 151 to 190 (RDVGQQLALAFNPEGSVLAAGAEDGTLRVFKWPSMNTLLN), 193 to 231 (QAHSSVKCLTFSESGQFLVSLGGPVCRVWDVNASAAVAS), 283 to 322 (IKKNSISAFNVSADGKLLAIGTLEGDVLILESTRMQTIQV), and 326 to 367 (AHLG…PGVR). Residues 368–388 (WWLLVLLIVLLYVVAYYYMKA) form a helical; Signal-anchor for type II membrane protein membrane-spanning segment. The Lumenal segment spans residues 389–393 (KGIIP).

In terms of assembly, interacts with BZIP28.

It is found in the endoplasmic reticulum membrane. The protein localises to the golgi apparatus. It localises to the cis-Golgi network membrane. Required for the formation or budding of transport vesicles from the ER. The chain is SEC12-like protein 2 (STL2P) from Arabidopsis thaliana (Mouse-ear cress).